The chain runs to 115 residues: Large ribosomal subunit protein uL18 (115 aa).

It belongs to the universal ribosomal protein uL18 family. As to quaternary structure, part of the 50S ribosomal subunit; part of the 5S rRNA/L5/L18/L25 subcomplex. Contacts the 5S and 23S rRNAs.

Functionally, this is one of the proteins that bind and probably mediate the attachment of the 5S RNA into the large ribosomal subunit, where it forms part of the central protuberance. The sequence is that of Large ribosomal subunit protein uL18 from Rickettsia rickettsii (strain Iowa).